Here is a 577-residue protein sequence, read N- to C-terminus: MRALTAAVLFVAGLTPVLAQDSSPTGPTFPNTVANCNAWYTIVKGDGCDTVEKKFKITPEQFFKWNPDVSTDCVKNFWVGNSYCVGVGKVVSSSKTSTTVKSSSTTQKTSSTSSKLSSSSKPVNTTTTPYSTRNPVTSYNLTQPYTATSLPPAKTQSGQPAYCNQWHWVGTGDTCLTILNLYGSRLTQEQLIIQHSEATALARTSYSVPWTSSQGNATVPAPTDYTPPVKTIVANFTASPQMTGVPQSCQNFYQAQDGDTCDVILKQFDYISREQFFSWNPALQGNCNGLWVGYYYCVANFATGVIPMPPTVTKVPDGAPTAINTCNKWYQAVGNDDCDAITTYFGTFSKSDFIKWNPSVYQDCSGLKTDSWYCVGIPGTPTTRTKPLTTTSLGSLPTQTGISASCKQYWLVSPSDTCASIISNAGVSADDFYKWNPALGGSACKGLQPNYYVCVSLTAAPTDSGSTTTITGPPTKGSNPPTTTTSGGGGGTIQTPSPIMPGMIGGCVRFWFRGKDGASLFCADIAKDAGVSLPDFLKWNPGVGSNCESLWADTWYCVGVSGKPTTMSSGIPTPASK.

Positions 1–19 (MRALTAAVLFVAGLTPVLA) are cleaved as a signal peptide. One can recognise a LysM 1 domain in the interval 38-85 (AWYTIVKGDGCDTVEKKFKITPEQFFKWNPDVSTDCVKNFWVGNSYCV). A compositionally biased stretch (low complexity) spans 96 to 121 (TSTTVKSSSTTQKTSSTSSKLSSSSK). The interval 96 to 135 (TSTTVKSSSTTQKTSSTSSKLSSSSKPVNTTTTPYSTRNP) is disordered. Over residues 122–135 (PVNTTTTPYSTRNP) the composition is skewed to polar residues. Residues Asn-124, Asn-140, Asn-216, and Asn-235 are each glycosylated (N-linked (GlcNAc...) asparagine). LysM domains follow at residues 251 to 298 (NFYQ…YYCV), 328 to 375 (KWYQ…WYCV), and 408 to 455 (QYWL…YVCV). A compositionally biased stretch (low complexity) spans 464–485 (SGSTTTITGPPTKGSNPPTTTT). The interval 464–490 (SGSTTTITGPPTKGSNPPTTTTSGGGG) is disordered. Residues 510 to 558 (FWFRGKDGASLFCADIAKDAGVSLPDFLKWNPGVGSNCESLWADTWYCV) enclose the LysM 5 domain.

Belongs to the secreted LysM effector family.

In terms of biological role, might have a role in sequestration of chitin oligosaccharides (breakdown products of fungal cell walls that are released during invasion and act as triggers of host immunity) to dampen host defense. The polypeptide is Secreted LysM effector Lys4 (Pochonia chlamydosporia (strain 123) (Metacordyceps chlamydosporia)).